The following is a 236-amino-acid chain: 7-cyano-7-deazaguanine synthase (236 aa).

7 to 17 (CSGGLDSVSLA) lines the ATP pocket. Zn(2+)-binding residues include Cys185, Cys193, Cys196, and Cys199.

Belongs to the QueC family. Zn(2+) serves as cofactor.

The catalysed reaction is 7-carboxy-7-deazaguanine + NH4(+) + ATP = 7-cyano-7-deazaguanine + ADP + phosphate + H2O + H(+). It functions in the pathway purine metabolism; 7-cyano-7-deazaguanine biosynthesis. Its function is as follows. Catalyzes the ATP-dependent conversion of 7-carboxy-7-deazaguanine (CDG) to 7-cyano-7-deazaguanine (preQ(0)). In Rhizobium meliloti (strain 1021) (Ensifer meliloti), this protein is 7-cyano-7-deazaguanine synthase.